Reading from the N-terminus, the 874-residue chain is UPF0182 protein Sfum_2137 (874 aa).

Helical transmembrane passes span 7 to 27 (WPLIILIGILGISAVVILSSL), 57 to 77 (IVFGAVTLLFFLIFFLNFWVA), 110 to 130 (SLWVYTPLSLILAVIIALPIF), 171 to 191 (RRLLIAFVLLLVGLVALYLLE), 208 to 228 (LHLSILILLIFLIETWDYVLQ), 252 to 272 (VIWALIWLTLFFLMGTAFSMI), and 283 to 303 (PLVVFAVGFVLVLGLRYSAFL).

The protein belongs to the UPF0182 family.

The protein localises to the cell membrane. The protein is UPF0182 protein Sfum_2137 of Syntrophobacter fumaroxidans (strain DSM 10017 / MPOB).